Reading from the N-terminus, the 446-residue chain is Maltoporin (446 aa).

Residues 1 to 25 (MMITLRKLPLAVAVAAGVMSAQAMA) form the signal peptide.

The protein belongs to the porin LamB (TC 1.B.3) family. In terms of assembly, homotrimer formed of three 18-stranded antiparallel beta-barrels, containing three independent channels.

Its subcellular location is the cell outer membrane. It catalyses the reaction beta-maltose(in) = beta-maltose(out). Its function is as follows. Involved in the transport of maltose and maltodextrins. This is Maltoporin from Escherichia coli O7:K1 (strain IAI39 / ExPEC).